The sequence spans 310 residues: Olfactory receptor 5P55 (310 aa).

Topologically, residues 1–25 (METQNHTTVTEFILLGLTESSTLRV) are extracellular. A glycan (N-linked (GlcNAc...) asparagine) is linked at N5. A helical transmembrane segment spans residues 26-46 (ILFMVFLGIYTVTLVGNFSII). The Cytoplasmic segment spans residues 47-54 (SLIRSCPQ). Residues 55 to 75 (LHTPMYLFLSHLAFVDIGFST) form a helical membrane-spanning segment. The Extracellular portion of the chain corresponds to 76–99 (SITPTMFKGFLGNRLVLSVAACIA). A disulfide bridge links C97 with C189. The helical transmembrane segment at 100 to 120 (QFCITVTFGTVECFLLAVMAY) threads the bilayer. Residues 121-133 (DRYVAICSPLLYS) lie on the Cytoplasmic side of the membrane. Residues 134–154 (THMSPRICFLLVGASYVGGCV) form a helical membrane-spanning segment. Over 155–196 (NSGAFTSCLSILSFCGPNQIDHFFCDFPAVLKLSCSDVSIIG) the chain is Extracellular. Residues 197–217 (IIPSISAGSIIVITVFVIAVS) form a helical membrane-spanning segment. At 218–237 (YAYILITILKMRSTEGRQKA) the chain is on the cytoplasmic side. Residues 238–258 (FSTCTSHLTAVTLYYGTITFI) form a helical membrane-spanning segment. The Extracellular segment spans residues 259–271 (YVMPKSNYSTAQN). N-linked (GlcNAc...) asparagine glycosylation is present at N265. The chain crosses the membrane as a helical span at residues 272 to 292 (KILSVFYTVVIPMLNPLIYSL). Residues 293–310 (RNRDVKEALRKAIIRIFP) lie on the Cytoplasmic side of the membrane.

This sequence belongs to the G-protein coupled receptor 1 family.

The protein localises to the cell membrane. Its function is as follows. Potential odorant receptor. This chain is Olfactory receptor 5P55, found in Mus musculus (Mouse).